Here is a 777-residue protein sequence, read N- to C-terminus: Probable aconitate hydratase, mitochondrial (777 aa).

Residues 1-26 (MNSLLRLSHLAGPAHYRALHSSSSIW) constitute a mitochondrion transit peptide. Substrate-binding positions include Q96 and 189–191 (DSH). Positions 382, 445, and 448 each coordinate [4Fe-4S] cluster. Substrate contacts are provided by R471 and R476. A disordered region spans residues 534-555 (YDPGEDTFQAPSGSGQVDVSPS). The segment covering 542 to 555 (QAPSGSGQVDVSPS) has biased composition (polar residues). Residues R601 and 664 to 665 (SR) each bind substrate.

The protein belongs to the aconitase/IPM isomerase family. As to quaternary structure, monomer. It depends on [4Fe-4S] cluster as a cofactor.

The protein resides in the mitochondrion. The enzyme catalyses citrate = D-threo-isocitrate. The protein operates within carbohydrate metabolism; tricarboxylic acid cycle; isocitrate from oxaloacetate: step 2/2. Catalyzes the isomerization of citrate to isocitrate via cis-aconitate. In Caenorhabditis elegans, this protein is Probable aconitate hydratase, mitochondrial.